Reading from the N-terminus, the 594-residue chain is Serine/threonine-protein kinase UL13 homolog (594 aa).

2 disordered regions span residues 1–105 and 128–183; these read MARS…TSQC and ECDA…VGGR. Basic residues predominate over residues 38 to 47; it reads RPKKSTRGRS. In terms of domain architecture, Protein kinase spans 223-594; sequence GEIPKFGGAG…SIPLLWTPRP (372 aa). Residues 229 to 237 and lysine 248 each bind ATP; that span reads GGAGSYGEV. The active-site Proton acceptor is the aspartate 349.

This sequence belongs to the protein kinase superfamily. Ser/Thr protein kinase family. Post-translationally, autophosphorylated.

Its subcellular location is the virion tegument. It localises to the host nucleus. It carries out the reaction L-seryl-[protein] + ATP = O-phospho-L-seryl-[protein] + ADP + H(+). It catalyses the reaction L-threonyl-[protein] + ATP = O-phospho-L-threonyl-[protein] + ADP + H(+). Multifunctional serine/threonine kinase that plays a role in several processes including egress of virus particles from the nucleus, modulation of the actin cytoskeleton and regulation of viral and cellular gene expression. Regulates the nuclear localization of viral envelopment factors UL34 and UL31 homologs, by phosphorylating the US3 kinase homolog, indicating a role in nuclear egress. Disrupts host nuclear lamins, including LMNA and LMNB1. Phosphorylates the viral Fc receptor composed of glycoproteins E (gE) and I (gI). Phosphorylation of glycoprotein E (gE) by UL13 homolog alters its subcellular localization, from the host early endosome to the plasma membrane. Participates in the transcriptional regulation of cellular and viral mRNAs mainly by phosphorylating the viral transcriptional regulator ICP22 homolog. This Equus caballus (Horse) protein is Serine/threonine-protein kinase UL13 homolog.